The sequence spans 575 residues: Proline--tRNA ligase (575 aa).

Belongs to the class-II aminoacyl-tRNA synthetase family. ProS type 1 subfamily. As to quaternary structure, homodimer.

It is found in the cytoplasm. The enzyme catalyses tRNA(Pro) + L-proline + ATP = L-prolyl-tRNA(Pro) + AMP + diphosphate. In terms of biological role, catalyzes the attachment of proline to tRNA(Pro) in a two-step reaction: proline is first activated by ATP to form Pro-AMP and then transferred to the acceptor end of tRNA(Pro). As ProRS can inadvertently accommodate and process non-cognate amino acids such as alanine and cysteine, to avoid such errors it has two additional distinct editing activities against alanine. One activity is designated as 'pretransfer' editing and involves the tRNA(Pro)-independent hydrolysis of activated Ala-AMP. The other activity is designated 'posttransfer' editing and involves deacylation of mischarged Ala-tRNA(Pro). The misacylated Cys-tRNA(Pro) is not edited by ProRS. The protein is Proline--tRNA ligase of Saccharophagus degradans (strain 2-40 / ATCC 43961 / DSM 17024).